The following is a 396-amino-acid chain: L-lactate dehydrogenase (396 aa).

Positions 1–380 (MIISAASDYR…SGDSLVQELG (380 aa)) constitute an FMN hydroxy acid dehydrogenase domain. Y24 contributes to the substrate binding site. Positions 106 and 127 each coordinate FMN. Residue Y129 participates in substrate binding. T155 lines the FMN pocket. R164 serves as a coordination point for substrate. Residue K251 coordinates FMN. Catalysis depends on H275, which acts as the Proton acceptor. R278 provides a ligand contact to substrate. 306 to 330 (DSGIRNGLDVVRMIALGADTVLLGR) is an FMN binding site.

It belongs to the FMN-dependent alpha-hydroxy acid dehydrogenase family. FMN serves as cofactor.

It localises to the cell inner membrane. It catalyses the reaction (S)-lactate + A = pyruvate + AH2. Catalyzes the conversion of L-lactate to pyruvate. Is coupled to the respiratory chain. This Salmonella newport (strain SL254) protein is L-lactate dehydrogenase.